The following is an 83-amino-acid chain: Conotoxin LiCr95 (83 aa).

The signal sequence occupies residues 1 to 22 (MKLTCALIVAMLFLTACQLTTT). Residues 23-50 (DDSRGRQKYPTERLRVKMRNPKLSKLTK) constitute a propeptide that is removed on maturation. 3 disulfide bridges follow: C52–C67, C59–C71, and C66–C80.

It belongs to the conotoxin O1 superfamily. As to expression, expressed by the venom duct.

It localises to the secreted. This is Conotoxin LiCr95 from Conus lividus (Livid cone).